A 176-amino-acid chain; its full sequence is RNA pyrophosphohydrolase (176 aa).

Residues 6–149 (GYRPNVGIVI…KRDVYRRVMK (144 aa)) enclose the Nudix hydrolase domain. Residues 38–59 (GGINPGESPEQAMYRELYEEVG) carry the Nudix box motif.

This sequence belongs to the Nudix hydrolase family. RppH subfamily. A divalent metal cation is required as a cofactor.

In terms of biological role, accelerates the degradation of transcripts by removing pyrophosphate from the 5'-end of triphosphorylated RNA, leading to a more labile monophosphorylated state that can stimulate subsequent ribonuclease cleavage. The protein is RNA pyrophosphohydrolase of Photorhabdus laumondii subsp. laumondii (strain DSM 15139 / CIP 105565 / TT01) (Photorhabdus luminescens subsp. laumondii).